Reading from the N-terminus, the 455-residue chain is Zinc finger and BTB domain-containing protein 8A.2 (455 aa).

Residues 24-92 (CDCHIMIDGH…MYSGKLNLSG (69 aa)) form the BTB domain. 2 consecutive C2H2-type zinc fingers follow at residues 299 to 321 (FKCPFCTHTVKRKADLKRHLLCH) and 327 to 350 (YPCQACGKRFTRLEHVRSHYRTIH).

It is found in the nucleus. In terms of biological role, may be involved in transcriptional regulation. The sequence is that of Zinc finger and BTB domain-containing protein 8A.2 (zbtb8a.2) from Xenopus tropicalis (Western clawed frog).